The chain runs to 162 residues: Phosphopantetheine adenylyltransferase (162 aa).

A substrate-binding site is contributed by threonine 9. ATP is bound by residues 9–10 and histidine 17; that span reads TF. Substrate-binding residues include lysine 41, leucine 77, and arginine 91. ATP contacts are provided by residues 92-94, glutamate 102, and 127-133; these read GLR and RQAIASK.

Belongs to the bacterial CoaD family. As to quaternary structure, homohexamer. Mg(2+) is required as a cofactor.

Its subcellular location is the cytoplasm. It catalyses the reaction (R)-4'-phosphopantetheine + ATP + H(+) = 3'-dephospho-CoA + diphosphate. It functions in the pathway cofactor biosynthesis; coenzyme A biosynthesis; CoA from (R)-pantothenate: step 4/5. Reversibly transfers an adenylyl group from ATP to 4'-phosphopantetheine, yielding dephospho-CoA (dPCoA) and pyrophosphate. This chain is Phosphopantetheine adenylyltransferase, found in Cereibacter sphaeroides (strain ATCC 17029 / ATH 2.4.9) (Rhodobacter sphaeroides).